The sequence spans 853 residues: A-kinase anchor protein 3 (853 aa).

Positions 124–137 (VSFYANRLTNLVIA) are PKA-RII subunit binding domain. The disordered stretch occupies residues 188–240 (RNAAPDKAPGSGDRVSGSSQSPPNLKYKSTLKIKESTKERQGPDDKPPSKKSF). 2 positions are modified to phosphoserine: Ser205 and Ser208. Residues 219–235 (KIKESTKERQGPDDKPP) show a composition bias toward basic and acidic residues. A Phosphoserine modification is found at Ser403. Tyr404 bears the Phosphotyrosine mark. Phosphoserine is present on residues Ser635 and Ser636.

It belongs to the AKAP110 family. Interacts with ROPN1 and ROPN1L. Interacts with QRICH2. Phosphorylated by STK33 during sperm flagella assembly. Phosphorylated on tyrosine residues. As to expression, testis specific; only expressed in spermatids.

It is found in the cytoplasmic vesicle. The protein resides in the secretory vesicle. The protein localises to the acrosome. Its subcellular location is the cell projection. It localises to the cilium. It is found in the flagellum. Structural component of sperm fibrous sheath. Required for the formation of the subcellular structure of the sperm flagellum, sperm motility and male fertility. In Homo sapiens (Human), this protein is A-kinase anchor protein 3.